The following is a 1015-amino-acid chain: SKI family transcriptional corepressor 2 (1015 aa).

Disordered stretches follow at residues 280-316 (HLLG…DDDD) and 518-934 (GAAG…KKDV). A compositionally biased stretch (pro residues) spans 284-295 (APPPPPPPPPPL). The span at 575 to 600 (PPADSVAAAGAGAAAAGSGPAGSRVP) shows a compositional bias: low complexity. Residues 628–637 (GGKDDAESLA) show a composition bias toward basic and acidic residues. The segment covering 653–669 (HPHHHHHPHHHHHHHHP) has biased composition (basic residues). Composition is skewed to pro residues over residues 670-684 (PQPP…PQPD) and 694-708 (APPP…PPLA). Composition is skewed to acidic residues over residues 730–745 (DSSE…QEVD) and 754–774 (GEEE…EETE). Residues 793 to 803 (PSEKGSSRDRA) are compositionally biased toward basic and acidic residues. A compositionally biased stretch (pro residues) spans 832 to 842 (DLPPPPPPPLA). Basic and acidic residues-rich tracts occupy residues 861–877 (PSLE…KTKE), 885–899 (TKDD…KEHS), and 912–922 (FWRERSGEHTQ).

It belongs to the SKI family. Interacts with SMAD2 and SMAD3. Expressed in cerebellum, spinal cord and testis. Isoform 2 is present in cerebellum (at protein level).

It is found in the nucleus. The protein localises to the cytoplasm. In terms of biological role, exhibits transcriptional repressor activity. Acts as a TGF-beta antagonist in the nervous system. This is SKI family transcriptional corepressor 2 from Homo sapiens (Human).